A 226-amino-acid chain; its full sequence is 3-dehydroquinate dehydratase (226 aa).

3-dehydroquinate is bound by residues 33 to 35 (EWR) and R65. Residue H121 is the Proton donor/acceptor of the active site. The active-site Schiff-base intermediate with substrate is K146. Residues R188, S207, and Q211 each coordinate 3-dehydroquinate.

It belongs to the type-I 3-dehydroquinase family. In terms of assembly, homodimer.

The enzyme catalyses 3-dehydroquinate = 3-dehydroshikimate + H2O. It functions in the pathway metabolic intermediate biosynthesis; chorismate biosynthesis; chorismate from D-erythrose 4-phosphate and phosphoenolpyruvate: step 3/7. Its function is as follows. Involved in the third step of the chorismate pathway, which leads to the biosynthesis of aromatic amino acids. Catalyzes the cis-dehydration of 3-dehydroquinate (DHQ) and introduces the first double bond of the aromatic ring to yield 3-dehydroshikimate. This Lactococcus lactis subsp. lactis (strain IL1403) (Streptococcus lactis) protein is 3-dehydroquinate dehydratase.